A 129-amino-acid chain; its full sequence is Ribosome-binding factor A (129 aa).

This sequence belongs to the RbfA family. In terms of assembly, monomer. Binds 30S ribosomal subunits, but not 50S ribosomal subunits or 70S ribosomes.

Its subcellular location is the cytoplasm. One of several proteins that assist in the late maturation steps of the functional core of the 30S ribosomal subunit. Associates with free 30S ribosomal subunits (but not with 30S subunits that are part of 70S ribosomes or polysomes). Required for efficient processing of 16S rRNA. May interact with the 5'-terminal helix region of 16S rRNA. In Gloeobacter violaceus (strain ATCC 29082 / PCC 7421), this protein is Ribosome-binding factor A.